We begin with the raw amino-acid sequence, 365 residues long: Formamidopyrimidine-DNA glycosylase (365 aa).

P2 functions as the Schiff-base intermediate with DNA in the catalytic mechanism. E3 (proton donor) is an active-site residue. K61 serves as the catalytic Proton donor; for beta-elimination activity. Positions 121-150 (RGRLAGHGDGMDGTSRTGSTLPGTGGTENS) are disordered. The span at 134-150 (TSRTGSTLPGTGGTENS) shows a compositional bias: polar residues. Residues H186, R205, and R246 each contribute to the DNA site. The FPG-type zinc finger occupies 331 to 365 (RVYGRGGQPCRHCGTTLATAQVAGRTTVFCPQCQR). The active-site Proton donor; for delta-elimination activity is the R355.

Belongs to the FPG family. Monomer. It depends on Zn(2+) as a cofactor.

It carries out the reaction Hydrolysis of DNA containing ring-opened 7-methylguanine residues, releasing 2,6-diamino-4-hydroxy-5-(N-methyl)formamidopyrimidine.. It catalyses the reaction 2'-deoxyribonucleotide-(2'-deoxyribose 5'-phosphate)-2'-deoxyribonucleotide-DNA = a 3'-end 2'-deoxyribonucleotide-(2,3-dehydro-2,3-deoxyribose 5'-phosphate)-DNA + a 5'-end 5'-phospho-2'-deoxyribonucleoside-DNA + H(+). In terms of biological role, involved in base excision repair of DNA damaged by oxidation or by mutagenic agents. Acts as a DNA glycosylase that recognizes and removes damaged bases. Has a preference for oxidized purines, such as 7,8-dihydro-8-oxoguanine (8-oxoG). Has AP (apurinic/apyrimidinic) lyase activity and introduces nicks in the DNA strand. Cleaves the DNA backbone by beta-delta elimination to generate a single-strand break at the site of the removed base with both 3'- and 5'-phosphates. The polypeptide is Formamidopyrimidine-DNA glycosylase (Nitratidesulfovibrio vulgaris (strain ATCC 29579 / DSM 644 / CCUG 34227 / NCIMB 8303 / VKM B-1760 / Hildenborough) (Desulfovibrio vulgaris)).